We begin with the raw amino-acid sequence, 399 residues long: F-box protein At1g30790 (399 aa).

The region spanning R3 to F49 is the F-box domain.

This Arabidopsis thaliana (Mouse-ear cress) protein is F-box protein At1g30790.